The chain runs to 125 residues: Large ribosomal subunit protein bL12 (125 aa).

The segment at 95–125 (APKPIKEGVDKKTAEEAKKKLEEAGAKAELK) is disordered.

This sequence belongs to the bacterial ribosomal protein bL12 family. In terms of assembly, homodimer. Part of the ribosomal stalk of the 50S ribosomal subunit. Forms a multimeric L10(L12)X complex, where L10 forms an elongated spine to which 2 to 4 L12 dimers bind in a sequential fashion. Binds GTP-bound translation factors.

Functionally, forms part of the ribosomal stalk which helps the ribosome interact with GTP-bound translation factors. Is thus essential for accurate translation. This Polynucleobacter necessarius subsp. necessarius (strain STIR1) protein is Large ribosomal subunit protein bL12.